The chain runs to 1326 residues: Paired amphipathic helix protein Sin3-like 4 (1326 aa).

PAH domains follow at residues Gln-8–Gly-78, Lys-95–Thr-165, and Ile-292–Cys-367. Disordered regions lie at residues Asp-272–Asp-299, Val-715–Thr-812, Ser-844–Leu-864, and Ser-927–Met-1000. Residues Gly-721 to Glu-737 show a composition bias toward basic and acidic residues. 4 stretches are compositionally biased toward polar residues: residues Ser-744–Ser-757, Ser-781–Thr-805, Ser-844–Thr-861, and Pro-942–Asp-961. The segment covering Asp-967–Ser-981 has biased composition (basic and acidic residues).

The protein resides in the nucleus. In terms of biological role, acts as a transcriptional repressor. Plays roles in regulating gene expression and genome stability. This is Paired amphipathic helix protein Sin3-like 4 (SNL4) from Arabidopsis thaliana (Mouse-ear cress).